We begin with the raw amino-acid sequence, 121 residues long: Ribonuclease CL2 (121 aa).

Positions 6 and 9 each coordinate substrate. Residue H11 is the Proton acceptor of the active site. 3 disulfide bridges follow: C26-C81, C42-C92, and C60-C107. Residues 43 to 47 (KPSNT) and R82 each bind substrate. The active-site Proton donor is H114.

It belongs to the pancreatic ribonuclease family.

Its subcellular location is the secreted. Pyrimidine-specific nuclease with preference for C. The protein is Ribonuclease CL2 of Gallus gallus (Chicken).